The primary structure comprises 228 residues: Putative adhesin A1I_01215 (228 aa).

The signal sequence occupies residues 1 to 22; sequence MKKLLLIAATSATVLSSALSFA.

The chain is Putative adhesin A1I_01215 from Rickettsia bellii (strain OSU 85-389).